A 306-amino-acid polypeptide reads, in one-letter code: Ornithine carbamoyltransferase (306 aa).

Residues 53-56, Gln80, Arg104, and 131-134 contribute to the carbamoyl phosphate site; these read STRT and HPCQ. Residues Asn162, Asp219, and 223 to 224 contribute to the L-ornithine site; that span reads SM. Residues 259 to 260 and Arg287 each bind carbamoyl phosphate; that span reads CL.

It belongs to the aspartate/ornithine carbamoyltransferase superfamily. OTCase family.

Its subcellular location is the cytoplasm. The catalysed reaction is carbamoyl phosphate + L-ornithine = L-citrulline + phosphate + H(+). The protein operates within amino-acid degradation; L-arginine degradation via ADI pathway; carbamoyl phosphate from L-arginine: step 2/2. Reversibly catalyzes the transfer of the carbamoyl group from carbamoyl phosphate (CP) to the N(epsilon) atom of ornithine (ORN) to produce L-citrulline. In Acinetobacter baumannii (strain AYE), this protein is Ornithine carbamoyltransferase.